Consider the following 232-residue polypeptide: MPSQQKKIIFCMAGVFSFACALGVVTALGTPLWIKATVLCKTGALLVNASGQELDKFMGEMQYGLFHGEGVRQCGLGARPFRFSFFPDLLKAIPVSIHVNVILFSAILIVLTMVGTAFFMYNAFGKPFETLHGPLGLYLLSFISGSCGCLVMILFASEVKIHHLSEKIANYKEGTYVYKTQSEKYTTSFWVIFFCFFVHFLNGLLIRLAGFQFPFAKSKDAETTNVAADLMY.

The helical transmembrane segment at 8–28 (IIFCMAGVFSFACALGVVTAL) threads the bilayer. An N-linked (GlcNAc...) asparagine glycan is attached at asparagine 48. 3 consecutive transmembrane segments (helical) span residues 101–121 (VILF…FFMY), 135–155 (LGLY…MILF), and 186–206 (TTSF…GLLI).

The protein belongs to the clarin family. In terms of tissue distribution, widely expressed. Found in the retina.

The protein resides in the cell membrane. Functionally, may have a role in the excitatory ribbon synapse junctions between hair cells and cochlear ganglion cells and presumably also in analogous synapses within the retina. The protein is Clarin-1 (CLRN1) of Homo sapiens (Human).